The primary structure comprises 552 residues: Cytochrome c oxidase subunit 1 (552 aa).

The chain crosses the membrane as a helical span at residues 35–55; the sequence is VIGIQYLVTAFIFYLIGGLMA. Fe(II)-heme a is bound at residue histidine 82. The next 6 membrane-spanning stretches (helical) occupy residues 85-105, 120-140, 164-184, 211-231, 252-272, and 284-304; these read IMIFLWVVPAAIGGFGNYLVP, ALAFWLNPPAGALLLASFLFG, WILAIILVGTSSILGSVNFIV, LLALVSTPVLAAGLILLLFDI, LFWFYSHPAVYLMILPIFGIM, and IFGYQAIAYSSLAICCVGLFV. Positions 258 and 262 each coordinate Cu cation. The 1'-histidyl-3'-tyrosine (His-Tyr) cross-link spans 258 to 262; sequence HPAVY. Positions 307 and 308 each coordinate Cu cation. The next 5 helical transmembrane spans lie at 321–341, 355–375, 390–410, 426–446, and 470–490; these read FFTISTLIVAVPTGVKIFSWV, MLFAIGLMSMFVLGGLSGVTL, VVAHFHYVLFGGSVFGLYAGI, LGILHFVLTLIGTNWTFLPMH, and ICTIGAFVLAFSIIPFLINII. Position 393 (histidine 393) interacts with heme a3. Histidine 395 serves as a coordination point for Fe(II)-heme a.

The protein belongs to the heme-copper respiratory oxidase family. Requires Cu(2+) as cofactor. The cofactor is heme.

It localises to the cell membrane. The enzyme catalyses 4 Fe(II)-[cytochrome c] + O2 + 8 H(+)(in) = 4 Fe(III)-[cytochrome c] + 2 H2O + 4 H(+)(out). It functions in the pathway energy metabolism; oxidative phosphorylation. In terms of biological role, cytochrome c oxidase is the component of the respiratory chain that catalyzes the reduction of oxygen to water. Subunits 1-3 form the functional core of the enzyme complex. CO I is the catalytic subunit of the enzyme. Electrons originating in cytochrome c are transferred via the copper A center of subunit 2 and heme A of subunit 1 to the bimetallic center formed by heme A3 and copper B. The protein is Cytochrome c oxidase subunit 1 (ctaD) of Thermostichus vulcanus (Synechococcus vulcanus).